We begin with the raw amino-acid sequence, 439 residues long: Probable non-inhibitory serpin-Z9 (439 aa).

Residues 12–44 (RRPPFPAGDANHRRLSSAPAPKPEAPAEAMPPP) form a disordered region. The span at 31–44 (APKPEAPAEAMPPP) shows a compositional bias: pro residues. Residues 389 to 413 (GIEETSVSMGLGKPLPAQHFKADHP) are RCL.

This sequence belongs to the serpin family.

The protein is Probable non-inhibitory serpin-Z9 of Oryza sativa subsp. japonica (Rice).